The following is a 233-amino-acid chain: Glutathione S-transferase U15 (233 aa).

In terms of domain architecture, GST N-terminal spans 5–85; the sequence is EEVKLLGTWY…YIDETWNSSG (81 aa). Glutathione-binding positions include 15 to 16, 42 to 43, 56 to 57, and 69 to 70; these read SP, SK, KV, and VS. Residues 92–219 enclose the GST C-terminal domain; the sequence is HPYDRALARF…VPDIDKVAKF (128 aa). T158 carries the phosphothreonine modification.

This sequence belongs to the GST superfamily. Tau family.

The protein resides in the cytoplasm. The protein localises to the cytosol. It catalyses the reaction RX + glutathione = an S-substituted glutathione + a halide anion + H(+). May be involved in the conjugation of reduced glutathione to a wide number of exogenous and endogenous hydrophobic electrophiles and have a detoxification role against certain herbicides. This chain is Glutathione S-transferase U15 (GSTU15), found in Arabidopsis thaliana (Mouse-ear cress).